We begin with the raw amino-acid sequence, 20 residues long: Pregnancy-associated glycoprotein 73B (20 aa).

The protein belongs to the peptidase A1 family. In terms of processing, N-glycosylated. As to expression, expressed in chorionic epithelium (trophectoderm).

The protein localises to the secreted. It localises to the extracellular space. In Bubalus bubalis (Domestic water buffalo), this protein is Pregnancy-associated glycoprotein 73B.